A 352-amino-acid polypeptide reads, in one-letter code: Fructose-1,6-bisphosphatase class 1 (352 aa).

Glu-111, Asp-133, Ile-135, and Asp-136 together coordinate Mg(2+). Substrate is bound by residues 136–139 (DGSS), Asn-228, Tyr-256, and Lys-286. Position 292 (Glu-292) interacts with Mg(2+).

This sequence belongs to the FBPase class 1 family. As to quaternary structure, homotetramer. The cofactor is Mg(2+).

Its subcellular location is the cytoplasm. The catalysed reaction is beta-D-fructose 1,6-bisphosphate + H2O = beta-D-fructose 6-phosphate + phosphate. It participates in carbohydrate biosynthesis; Calvin cycle. In Crocosphaera subtropica (strain ATCC 51142 / BH68) (Cyanothece sp. (strain ATCC 51142)), this protein is Fructose-1,6-bisphosphatase class 1.